The primary structure comprises 190 residues: Thioredoxin F-type, chloroplastic (190 aa).

Positions 1 to 31 (MALHLSLSHQSWTSPAHPITSSDPTRSSVPG) are disordered. The N-terminal 77 residues, 1-77 (MALHLSLSHQ…SMEQALGTQE (77 aa)), are a transit peptide targeting the chloroplast. The segment covering 7–30 (LSHQSWTSPAHPITSSDPTRSSVP) has biased composition (polar residues). Residues 78–189 (MEAIVGKVTE…LLEAIQAARS (112 aa)) form the Thioredoxin domain. Residues cysteine 114 and cysteine 117 each act as nucleophile in the active site. A disulfide bridge links cysteine 114 with cysteine 117.

The protein belongs to the thioredoxin family. Plant F-type subfamily. Forms a complex with heterodimeric ferredoxin-thioredoxin reductase (FTR) and ferredoxin.

It localises to the plastid. It is found in the chloroplast. Participates in various redox reactions through the reversible oxidation of the active center dithiol to a disulfide. The F form is known to activate a number of enzymes of the photosynthetic carbon cycle. The chain is Thioredoxin F-type, chloroplastic from Spinacia oleracea (Spinach).